The primary structure comprises 375 residues: MTDVELRVEALSLSGVSAIPPEYVRPEEERADLGDALELARAASDDDATARIPVVDISAFDNDGDGRHACVEAVRAAAEEWGVIHIAGHGLPGDVLGRLRAAGEAFFALPIAEKEAYANDPAAGRLQGYGSKLAANASGKREWEDYLFHLVHPDHLADHSLWPANPPEYVPVSRDFGGRVRTLASKLLAILSLGLGLPEETLERRLRGHELAGVDDDLLLQLKINYYPRCPRPDLAVGVEAHTDVSALSFILHNGVPGLQVHHAGSWVTARPEPGTIVVHVGDALEILTNGRYTSVLHRGLVSRDAVRLSWVVFCEPPPESVLLQPVPELLADGADKPLFAPRTFKQHVQRKLFEKLKDQQDNNAAAASNGMRTK.

In terms of domain architecture, Fe2OG dioxygenase spans leucine 218 to proline 317. Positions 242, 244, and 298 each coordinate Fe cation. A 2-oxoglutarate-binding site is contributed by arginine 308.

This sequence belongs to the iron/ascorbate-dependent oxidoreductase family. L-ascorbate is required as a cofactor. Requires Fe(2+) as cofactor.

The catalysed reaction is a (2R,3S,4S)-leucoanthocyanidin + 2-oxoglutarate + O2 = a 4-H-anthocyanidin with a 3-hydroxy group + succinate + CO2 + 2 H2O. It functions in the pathway pigment biosynthesis; anthocyanin biosynthesis. Functionally, involved in anthocyanin and protoanthocyanidin biosynthesis by catalyzing the oxidation of leucoanthocyanidins into anthocyanidins. The polypeptide is Leucoanthocyanidin dioxygenase 1 (Oryza sativa subsp. japonica (Rice)).